Here is a 604-residue protein sequence, read N- to C-terminus: Elongation factor 4 (604 aa).

Residues 10 to 191 (KNIRNFSIIA…KIITTIPAPS (182 aa)) enclose the tr-type G domain. GTP contacts are provided by residues 22–27 (DHGKST) and 138–141 (NKID).

This sequence belongs to the TRAFAC class translation factor GTPase superfamily. Classic translation factor GTPase family. LepA subfamily.

It is found in the cell inner membrane. The catalysed reaction is GTP + H2O = GDP + phosphate + H(+). Its function is as follows. Required for accurate and efficient protein synthesis under certain stress conditions. May act as a fidelity factor of the translation reaction, by catalyzing a one-codon backward translocation of tRNAs on improperly translocated ribosomes. Back-translocation proceeds from a post-translocation (POST) complex to a pre-translocation (PRE) complex, thus giving elongation factor G a second chance to translocate the tRNAs correctly. Binds to ribosomes in a GTP-dependent manner. This Helicobacter pylori (strain J99 / ATCC 700824) (Campylobacter pylori J99) protein is Elongation factor 4.